Here is a 198-residue protein sequence, read N- to C-terminus: Recombination protein RecR (198 aa).

The segment at 57–72 adopts a C4-type zinc-finger fold; it reads CAMCNTFTESAVCETC. Residues 80-175 enclose the Toprim domain; the sequence is ALLCVVETPG…KVSRLARGVP (96 aa).

The protein belongs to the RecR family.

Its function is as follows. May play a role in DNA repair. It seems to be involved in an RecBC-independent recombinational process of DNA repair. It may act with RecF and RecO. The polypeptide is Recombination protein RecR (Herminiimonas arsenicoxydans).